A 69-amino-acid polypeptide reads, in one-letter code: Dermaseptin-H3 (69 aa).

The signal sequence occupies residues Met-1 to Cys-22. Residues Glu-23–Met-43 constitute a propeptide that is removed on maturation. The segment at Glu-24 to Lys-44 is disordered. Residues Glu-30 to Gln-40 show a composition bias toward acidic residues. Leu-66 bears the Leucine amide mark. A propeptide spanning residues Glu-68–Gln-69 is cleaved from the precursor.

This sequence belongs to the frog skin active peptide (FSAP) family. Dermaseptin subfamily. In terms of tissue distribution, expressed by the skin glands.

It is found in the secreted. Possesses a potent antimicrobial activity against Gram-positive and Gram-negative bacteria. Probably acts by disturbing membrane functions with its amphipathic structure. The protein is Dermaseptin-H3 of Pithecopus azureus (Orange-legged monkey tree frog).